Here is a 326-residue protein sequence, read N- to C-terminus: Metal-binding protein YtgA (326 aa).

The N-terminal stretch at 1 to 21 is a signal peptide; sequence MFFLHVRKYKHVIGGLLCLAG. The Fe(2+) site is built by histidine 75, histidine 141, histidine 207, and aspartate 299.

It belongs to the bacterial solute-binding protein 9 family. Monomer.

It is found in the periplasm. Part of the ATP-binding cassette (ABC) transport system YtgABCD involved in metal import. Binds Fe(2+), Mn(2+) and Ni(2+), with a preference for Fe(2+) and delivers them to the membrane permease for translocation into the cytoplasm. This chain is Metal-binding protein YtgA, found in Chlamydia muridarum (strain MoPn / Nigg).